The chain runs to 549 residues: Undecaprenyl phosphate-alpha-4-amino-4-deoxy-L-arabinose arabinosyl transferase (549 aa).

The next 12 helical transmembrane spans lie at 9-29 (LLLI…GLWI), 80-100 (LFGV…LAYL), 112-132 (SLAC…SGYA), 136-156 (PQFT…LDAG), 176-196 (FLTK…PYML), 204-224 (LLGY…PWAL), 256-276 (PWWF…GLLP), 288-308 (QPPV…FSLS), 312-332 (LPTY…HALV), 346-366 (NGLL…YLQL), 376-396 (FELF…LAQW), and 402-422 (AWAA…AAMP).

The protein belongs to the glycosyltransferase 83 family.

It localises to the cell inner membrane. The catalysed reaction is 4-amino-4-deoxy-alpha-L-arabinopyranosyl di-trans,octa-cis-undecaprenyl phosphate + lipid IVA = lipid IIA + di-trans,octa-cis-undecaprenyl phosphate.. Its pathway is lipopolysaccharide metabolism; 4-amino-4-deoxy-beta-L-arabinose-lipid A biosynthesis. In terms of biological role, catalyzes the transfer of the L-Ara4N moiety of the glycolipid undecaprenyl phosphate-alpha-L-Ara4N to lipid A. The modified arabinose is attached to lipid A and is required for resistance to polymyxin and cationic antimicrobial peptides. In Pseudomonas paraeruginosa (strain DSM 24068 / PA7) (Pseudomonas aeruginosa (strain PA7)), this protein is Undecaprenyl phosphate-alpha-4-amino-4-deoxy-L-arabinose arabinosyl transferase.